A 217-amino-acid polypeptide reads, in one-letter code: Probable transaldolase (217 aa).

Residue Lys83 is the Schiff-base intermediate with substrate of the active site.

The protein belongs to the transaldolase family. Type 3B subfamily.

Its subcellular location is the cytoplasm. It carries out the reaction D-sedoheptulose 7-phosphate + D-glyceraldehyde 3-phosphate = D-erythrose 4-phosphate + beta-D-fructose 6-phosphate. It participates in carbohydrate degradation; pentose phosphate pathway; D-glyceraldehyde 3-phosphate and beta-D-fructose 6-phosphate from D-ribose 5-phosphate and D-xylulose 5-phosphate (non-oxidative stage): step 2/3. In terms of biological role, transaldolase is important for the balance of metabolites in the pentose-phosphate pathway. The protein is Probable transaldolase of Brucella melitensis biotype 1 (strain ATCC 23456 / CCUG 17765 / NCTC 10094 / 16M).